A 54-amino-acid chain; its full sequence is Large ribosomal subunit protein bL33A (54 aa).

Belongs to the bacterial ribosomal protein bL33 family.

The polypeptide is Large ribosomal subunit protein bL33A (rpmG1) (Mycobacterium bovis (strain ATCC BAA-935 / AF2122/97)).